The sequence spans 171 residues: Shikimate kinase (171 aa).

ATP is bound at residue 13–18 (GVGKST). Ser17 contacts Mg(2+). Substrate is bound by residues Asp35, Arg59, and Gly81. ATP is bound at residue Arg118. Arg136 contributes to the substrate binding site. Arg153 serves as a coordination point for ATP.

This sequence belongs to the shikimate kinase family. In terms of assembly, monomer. It depends on Mg(2+) as a cofactor.

Its subcellular location is the cytoplasm. The catalysed reaction is shikimate + ATP = 3-phosphoshikimate + ADP + H(+). It functions in the pathway metabolic intermediate biosynthesis; chorismate biosynthesis; chorismate from D-erythrose 4-phosphate and phosphoenolpyruvate: step 5/7. Functionally, catalyzes the specific phosphorylation of the 3-hydroxyl group of shikimic acid using ATP as a cosubstrate. The sequence is that of Shikimate kinase from Streptomyces avermitilis (strain ATCC 31267 / DSM 46492 / JCM 5070 / NBRC 14893 / NCIMB 12804 / NRRL 8165 / MA-4680).